We begin with the raw amino-acid sequence, 1795 residues long: MQSPSIHRNTGSIIQPTVTPDARAATDLQERAEQPRQRSSHSLSSVGKRALKSVGKLFQKSKAPQQKAATPPTAKNVKTPPPASNVATPRNKARESGFSNSSPQNTHSAPKSILRNHPNQASSSGAQTHEIHPEAAPRKNLRVRFDLPQDRLERSPSYLDSDNPMTDEEAVANATRQFRSPDSHLQGSDGTRISMLATDPDQPSSSGSKIGDSDGPIPPREPMLWRSNGGRFELKDEKLVRNSEPQGSIQLDAKGKPDFSTFNTPGLAPLLDSILATPKQTYLAHQSKDGVHGHQLLQANGHLLHLAQDDSSLAVIRSSNEALLIEGKKPPAVKMEREDGNIHIDTASGRKTQELPGKAHIAHITNVLLSHDGERMRVHEDRLYQFDPISTRWKIPEGLEDTAFNSLSTGGNGSVYAKSDDAVVDLSSPFMPHVEVEDLQSFSVAPDNRAALLSGKTTQAILLTDMSPVIGGLTPKKTKGLELDGGKAQAAAVGLSGDKLFIADTQGRLYSADRSAFEGDDPKLKLMPEQANFQLEGVPLGGHNRVTGFINGDDGGVHALIKNRQGETHSHALDEQSSKLQSGWNLTNALVLNNNRGLTMPPPPTAADRLNLDRAGLVGLSEGRIQRWDATPECWKDAGIKDIDRLQRGADSNAYVLKGGKLHALKIAAEHPNMAFDRNTALAQTARSTKVEMGKEIEGLDDRVIKAFAMVSNKRFVALDDQNKLTAHSKDHKPVTLDIPGLEGDIKSLSLDEKHNLHALTSTGGLYCLPKEAWQSTKLGDQLRARWTPVALPGGQPVKALFTNDDNVLSAQIEDAEGKGLMQLKAGQWQRFEQRPVEENGLNDVHSRITGSNKTWRIPKTGLTLRMDVNTFGRSGVEKSKKASTSEFIRANIYKNTAETPRWMKNVGDHIQHRYQGRLGLKEVYETESMLFKQLELIHESGGRPPARGQDLKARITALEAKLGPQGATLVKELETLRDELENHSYTALMSIGQSYGKAKNLKQQDGILNQHGELAKPSVRMQFGKKLADLGTKLNFKSSGHDLVKELQDALTQVAPSAENPTKKLLGTLKHQGLKLSHQKADIPLGQRRDASEDHGLSKARLALDLVTLKSLGALLDQVEQLPPQSDIEPLQKKLATLRDVTYGENPVKVVTDMGFTDNKALESGYESVKTFLKSFKKADHAVSVNMRAATGSKDQAELAGKFKSMLKQLEHGDDEVGLQRSYGVNLTTPFIILADKATGLWPTAGATGNRNYILNAERCEGGVTLYLISEGAGNVSGGFGAGKDYWPGFFDANNPARSVDVGNNRTLTPNFRLGVDVTATVAASQRAGVVFNVPDEDIDAFVDDLFEGQLNPLQVLKKAVDHESYEARRFNFDLTAGGTADIRAGINLTEDRDPNADPNSDSFSAVVRGGFAANITVNLMTYTDYSLTQKNDKTELKEGGKNRPRFLNNVTAGGQLRAQIGGSHTAPTGTPASAPGPTPASQTAANNLGGALNFSVENRTVKRIKFRYNVAKPITTEGLSKLSKGLGEAFLDNTTKAKLAELADPLNARYTGKKPDEVIQAQLDGLEELFADIPPPKDNDKQYKALRDLKRAAVEHRASANKHSVMDNARFETSKTNLSGLSSESILTKIMSSVRDASAPGNATRVAEFMRQDPKLRAMLKEMEGSIGTLARVRLEPKDSLVDKIDEGSLNGTMTQSDLSSMLEDRNEMRIKRLVVFHTATQAENFTSPTPLVSYNSGANVSVTKTLGRINFVYGADQDKPIGYTFDGELSRPSASLKEAAGDLKKEGFELKS.

Residues 1-18 (MQSPSIHRNTGSIIQPTV) show a composition bias toward polar residues. The tract at residues 1 to 227 (MQSPSIHRNT…PPREPMLWRS (227 aa)) is disordered. Residues 60–75 (KSKAPQQKAATPPTAK) show a composition bias toward low complexity. Composition is skewed to polar residues over residues 97-109 (GFSN…THSA) and 117-127 (HPNQASSSGAQ). A compositionally biased stretch (basic and acidic residues) spans 129 to 154 (HEIHPEAAPRKNLRVRFDLPQDRLER). Polar residues predominate over residues 174–191 (ATRQFRSPDSHLQGSDGT). A compositionally biased stretch (low complexity) spans 203–215 (PSSSGSKIGDSDG). Short sequence motifs (wxxxE) lie at residues 393–397 (WKIPE) and 829–833 (WQRFE). The interval 1461-1488 (QIGGSHTAPTGTPASAPGPTPASQTAAN) is disordered. Residues 1467–1487 (TAPTGTPASAPGPTPASQTAA) show a composition bias toward low complexity. The ERMRS signature appears at 1787 to 1790 (KKEG).

The protein belongs to the AvrE family. In planta interaction assays, interacts with the A.thaliana protein phosphatase 2A (PP2A) via direct interaction/association with specific B' regulatory subunits.

The protein resides in the secreted. It is found in the host cell. It localises to the host cell membrane. Its activity is regulated as follows. Polyamidoamine dendrimers inhibit channel and virulence activities. Its function is as follows. Major virulence factor that may function as a water- and solute-permeable channel dedicated to creating osmotic/water potential perturbation and a water- and nutrient-rich apoplast in which bacteria multiply within the infected plant tissues. Expression in Xenopus oocytes results in inward and outward currents, permeability to water and osmolarity-dependent oocyte swelling and bursting. Elicits cell death in host tomato leaves and in non-host Nicotiana tabacum leaves. Acts within plant cells and promotes lesion formation. The combined action of AvrE and HopM1 is particularly important in promoting bacterial growth in plants. Contributes to the down-regulation of a specific subset of A.thaliana genes during infection, including NHL13, which is required for antibacterial immunity. This Pseudomonas syringae pv. tomato (strain ATCC BAA-871 / DC3000) protein is Type III effector AvrE.